A 94-amino-acid chain; its full sequence is Co-chaperonin GroES (94 aa).

It belongs to the GroES chaperonin family. In terms of assembly, heptamer of 7 subunits arranged in a ring. Interacts with the chaperonin GroEL.

The protein resides in the cytoplasm. Functionally, together with the chaperonin GroEL, plays an essential role in assisting protein folding. The GroEL-GroES system forms a nano-cage that allows encapsulation of the non-native substrate proteins and provides a physical environment optimized to promote and accelerate protein folding. GroES binds to the apical surface of the GroEL ring, thereby capping the opening of the GroEL channel. In Orientia tsutsugamushi (Rickettsia tsutsugamushi), this protein is Co-chaperonin GroES.